We begin with the raw amino-acid sequence, 101 residues long: Fructose-bisphosphate aldolase (101 aa).

K11 functions as the Schiff-base intermediate with dihydroxyacetone-P in the catalytic mechanism.

This sequence belongs to the class I fructose-bisphosphate aldolase family.

It catalyses the reaction beta-D-fructose 1,6-bisphosphate = D-glyceraldehyde 3-phosphate + dihydroxyacetone phosphate. Its pathway is carbohydrate degradation; glycolysis; D-glyceraldehyde 3-phosphate and glycerone phosphate from D-glucose: step 4/4. The polypeptide is Fructose-bisphosphate aldolase (Lymnaea stagnalis (Great pond snail)).